The chain runs to 455 residues: MHTIKLFLFVVPLVIASRVDPDLSSFDSAPSEPKSRFAMLDDVKILANGLLQLGHGLKDFVHKTKGQINDIFQKLNIFDQSFYDLSLRTNEIKEEEKELRRTTSTLQVKNEEVKNMSVELNSKLESLLEEKTALQHKVRALEEQLTNLILSPAGAQEHPEVTSLKSFVEQQDNSIRELLQSVEEQYKQLSQQHMQIKEIEKQLRKTGIQEPSENSLSSKSRAPRTTPPLQLNETENTEQDDLPADCSAVYNRGEHTSGVYTIKPRNSQGFNVYCDTQSGSPWTLIQHRKDGSQDFNETWENYEKGFGRLDGEFWLGLEKIYAIVQQSNYILRLELQDWKDSKHYVEYSFHLGSHETNYTLHVAEIAGNIPGALPEHTDLMFSTWNHRAKGQLYCPESYSGGWWWNDICGENNLNGKYNKPRTKSRPERRRGIYWRPQSRKLYAIKSSKMMLQPTT.

The signal sequence occupies residues 1–16 (MHTIKLFLFVVPLVIA). The sufficient to inhibit LPL lipase activity stretch occupies residues 17–165 (SRVDPDLSSF…QEHPEVTSLK (149 aa)). The sufficient to inhibit LIPG/EL phospholipase activity stretch occupies residues 17–207 (SRVDPDLSSF…EIEKQLRKTG (191 aa)). Residues 32-56 (EPKSRFAMLDDVKILANGLLQLGHG) form a required for inhibition of LPL lipase activity region. The stretch at 85–206 (LSLRTNEIKE…KEIEKQLRKT (122 aa)) forms a coiled coil. N-linked (GlcNAc...) asparagine glycosylation occurs at asparagine 115. Positions 202-242 (QLRKTGIQEPSENSLSSKSRAPRTTPPLQLNETENTEQDDL) are disordered. Over residues 209 to 220 (QEPSENSLSSKS) the composition is skewed to polar residues. Threonine 226 is a glycosylation site (O-linked (GlcNAc) threonine). N-linked (GlcNAc...) asparagine glycosylation is present at asparagine 232. The Fibrinogen C-terminal domain maps to 237 to 455 (TEQDDLPADC…SSKMMLQPTT (219 aa)). The cysteines at positions 246 and 274 are disulfide-linked. N-linked (GlcNAc...) asparagine glycosylation is found at asparagine 296 and asparagine 357. A disulfide bridge links cysteine 394 with cysteine 408.

In terms of assembly, interacts with ANGPTL8. Interacts with ITGB3. In terms of processing, in part proteolytically cleaved by proprotein convertases; proposed to be involved in activation. In primary hepatocytes is intracellularily predominantly processed by FURIN and extracellularily by FURIN and PCSK6/PACE4. In 18.5 dpc embryos 75% of protein is found to be processed compared to 25 % in adults. In terms of tissue distribution, predominantly expressed in liver, weakly expressed in kidney and lung. Expressed in podocytes (at protein level). Expressed in hypothalamic neurons (at protein level). Expressed in bone marrow sinusoidal endothelial cells (at protein level).

The protein resides in the secreted. Its subcellular location is the cell projection. It is found in the lamellipodium. Functionally, acts in part as a hepatokine that is involved in regulation of lipid and glucose metabolism. Proposed to play a role in the trafficking of energy substrates to either storage or oxidative tissues in response to food intake. Has a stimulatory effect on plasma triglycerides (TG), which is achieved by suppressing plasma TG clearance via inhibition of LPL activity; the function seems to be specific for the feeding conditions. The inhibition of LPL activity appears to be an indirect mechanism involving recruitment of proprotein convertases PCSK6 and FURIN to LPL leading to cleavage and dissociation of LPL from the cell surface; the function does not require ANGPTL3 proteolytic cleavage but seems to be mediated by the N-terminal domain, and is not inhibited by GPIHBP1. Can inhibit endothelial lipase, causing increased plasma levels of high density lipoprotein (HDL) cholesterol and phospholipids; the cleaved N-terminal domain is more efficient than the uncleaved proprotein. Can bind to adipocytes to activate lipolysis, releasing free fatty acids and glycerol. Suppresses LPL specifically in oxidative tissues which is required to route very low density lipoprotein (VLDL)-TG to white adipose tissue (WAT) for storage in response to food; the function may involve cooperation with circulating, liver-derived ANGPTL8 and ANGPTL4 expression in WAT. Contributes to lower plasma levels of low density lipoprotein (LDL)-cholesterol by a mechanism that is independent of the canonical pathway implicating APOE and LDLR. May stimulate hypothalamic LPL activity. Involved in angiogenesis. Binds to endothelial cells via integrin alpha-V/beta-3 (ITGAV:ITGB3), activates FAK, MAPK and Akt signaling pathways and induces cell adhesion and cell migration. May increase the motility of podocytes. Secreted from podocytes, may modulate properties of glomerular endothelial cells involving integrin alpha-V/beta-3 and Akt signaling. May induce actin filament rearrangements in podocytes implicating integrin alpha-V/beta-3 and Rac1 activation. Binds to hematopoietic stem cells (HSC) and is involved in the regulation of HSC activity probably implicating down-regulation of IKZF1/IKAROS. This is Angiopoietin-related protein 3 (Angptl3) from Mus musculus (Mouse).